The chain runs to 312 residues: Glyoxylate/hydroxypyruvate reductase A (312 aa).

Residue R227 is part of the active site. H275 serves as the catalytic Proton donor.

The protein belongs to the D-isomer specific 2-hydroxyacid dehydrogenase family. GhrA subfamily.

The protein localises to the cytoplasm. It carries out the reaction glycolate + NADP(+) = glyoxylate + NADPH + H(+). The enzyme catalyses (R)-glycerate + NAD(+) = 3-hydroxypyruvate + NADH + H(+). It catalyses the reaction (R)-glycerate + NADP(+) = 3-hydroxypyruvate + NADPH + H(+). In terms of biological role, catalyzes the NADPH-dependent reduction of glyoxylate and hydroxypyruvate into glycolate and glycerate, respectively. In Salmonella choleraesuis (strain SC-B67), this protein is Glyoxylate/hydroxypyruvate reductase A.